We begin with the raw amino-acid sequence, 140 residues long: ATP synthase epsilon chain (140 aa).

The protein belongs to the ATPase epsilon chain family. In terms of assembly, F-type ATPases have 2 components, CF(1) - the catalytic core - and CF(0) - the membrane proton channel. CF(1) has five subunits: alpha(3), beta(3), gamma(1), delta(1), epsilon(1). CF(0) has three main subunits: a, b and c.

The protein localises to the cell inner membrane. In terms of biological role, produces ATP from ADP in the presence of a proton gradient across the membrane. This chain is ATP synthase epsilon chain, found in Yersinia pseudotuberculosis serotype O:1b (strain IP 31758).